We begin with the raw amino-acid sequence, 308 residues long: MAVAMDNAILENILRQVRPLIGQGKVADYIPALATVDGSRLGIAICTVDGQLFQAGDAQERFSIQSISKVLSLVVAMRHYSEEEIWQRVGKDPSGSPFNSLVQLEMEQGIPRNPFINAGALVVCDMLQGRLSAPRQRMLEVVRGLSGVSDISYDTVVARSEFEHSARNAAIAWLMKSFGNFHHDVTTVLQNYFHYCALKMSCVELARTFVFLANQGKAIHIDEPVVTPMQARQINALMATSGMYQNAGEFAWRVGLPAKSGVGGGIVAIVPHEMAIAVWSPELDDAGNSLAGIAVLEQLTKQLGRSVY.

Serine 66, asparagine 117, glutamate 161, asparagine 168, tyrosine 192, tyrosine 244, and valine 262 together coordinate substrate.

This sequence belongs to the glutaminase family. In terms of assembly, homotetramer.

It carries out the reaction L-glutamine + H2O = L-glutamate + NH4(+). In Escherichia coli O157:H7, this protein is Glutaminase 2.